A 269-amino-acid polypeptide reads, in one-letter code: Protein IAL1 (269 aa).

The LOB domain maps to S32 to L133.

Belongs to the LOB domain-containing protein family. In terms of tissue distribution, expressed in leaves, leaf primordia, immature ears, immature tassels, whole ovules, silk and husk leaves.

It localises to the nucleus. The polypeptide is Protein IAL1 (Zea mays (Maize)).